The sequence spans 269 residues: Shikimate dehydrogenase (NADP(+)) (269 aa).

Shikimate contacts are provided by residues 14–16 (SVS) and Thr61. Residue Lys65 is the Proton acceptor of the active site. Residues Asn85 and Asp98 each coordinate shikimate. Residues 120–124 (GAGGA), 143–148 (NRTEEK), and Thr211 contribute to the NADP(+) site. Residue Tyr213 participates in shikimate binding. Gly234 contacts NADP(+).

The protein belongs to the shikimate dehydrogenase family. As to quaternary structure, homodimer.

The catalysed reaction is shikimate + NADP(+) = 3-dehydroshikimate + NADPH + H(+). The protein operates within metabolic intermediate biosynthesis; chorismate biosynthesis; chorismate from D-erythrose 4-phosphate and phosphoenolpyruvate: step 4/7. Functionally, involved in the biosynthesis of the chorismate, which leads to the biosynthesis of aromatic amino acids. Catalyzes the reversible NADPH linked reduction of 3-dehydroshikimate (DHSA) to yield shikimate (SA). In Archaeoglobus fulgidus (strain ATCC 49558 / DSM 4304 / JCM 9628 / NBRC 100126 / VC-16), this protein is Shikimate dehydrogenase (NADP(+)).